Here is a 122-residue protein sequence, read N- to C-terminus: Large ribosomal subunit protein uL18 (122 aa).

The protein belongs to the universal ribosomal protein uL18 family. Part of the 50S ribosomal subunit; part of the 5S rRNA/L5/L18/L25 subcomplex. Contacts the 5S and 23S rRNAs.

Its function is as follows. This is one of the proteins that bind and probably mediate the attachment of the 5S RNA into the large ribosomal subunit, where it forms part of the central protuberance. The chain is Large ribosomal subunit protein uL18 from Hydrogenobaculum sp. (strain Y04AAS1).